The chain runs to 336 residues: Methionyl-tRNA formyltransferase (336 aa).

112 to 115 (SILP) serves as a coordination point for (6S)-5,6,7,8-tetrahydrofolate.

Belongs to the Fmt family.

The catalysed reaction is L-methionyl-tRNA(fMet) + (6R)-10-formyltetrahydrofolate = N-formyl-L-methionyl-tRNA(fMet) + (6S)-5,6,7,8-tetrahydrofolate + H(+). Functionally, attaches a formyl group to the free amino group of methionyl-tRNA(fMet). The formyl group appears to play a dual role in the initiator identity of N-formylmethionyl-tRNA by promoting its recognition by IF2 and preventing the misappropriation of this tRNA by the elongation apparatus. In Trichodesmium erythraeum (strain IMS101), this protein is Methionyl-tRNA formyltransferase.